A 374-amino-acid chain; its full sequence is Chaperone protein DnaJ (374 aa).

One can recognise a J domain in the interval 4-69 (SYYEILEITQ…EKRAIYDRYG (66 aa)). The segment at 136–213 (GCKKNIDFTY…CKGLGYNESK (78 aa)) adopts a CR-type zinc-finger fold. Residues C149, C152, C165, C168, C187, C190, C201, and C204 each coordinate Zn(2+). 4 CXXCXGXG motif repeats span residues 149–156 (CKTCNGTG), 165–172 (CPKCQGRG), 187–194 (CPDCQGSG), and 201–208 (CNDCKGLG).

Belongs to the DnaJ family. Homodimer. Requires Zn(2+) as cofactor.

It localises to the cytoplasm. Functionally, participates actively in the response to hyperosmotic and heat shock by preventing the aggregation of stress-denatured proteins and by disaggregating proteins, also in an autonomous, DnaK-independent fashion. Unfolded proteins bind initially to DnaJ; upon interaction with the DnaJ-bound protein, DnaK hydrolyzes its bound ATP, resulting in the formation of a stable complex. GrpE releases ADP from DnaK; ATP binding to DnaK triggers the release of the substrate protein, thus completing the reaction cycle. Several rounds of ATP-dependent interactions between DnaJ, DnaK and GrpE are required for fully efficient folding. Also involved, together with DnaK and GrpE, in the DNA replication of plasmids through activation of initiation proteins. The protein is Chaperone protein DnaJ of Campylobacter jejuni subsp. doylei (strain ATCC BAA-1458 / RM4099 / 269.97).